Reading from the N-terminus, the 180-residue chain is 6,7-dimethyl-8-ribityllumazine synthase (180 aa).

Residues F23, 61–63 (SFE), and 85–87 (AVI) contribute to the 5-amino-6-(D-ribitylamino)uracil site. 90–91 (QT) is a binding site for (2S)-2-hydroxy-3-oxobutyl phosphate. The Proton donor role is filled by H93. Residue F118 coordinates 5-amino-6-(D-ribitylamino)uracil. Residue R132 coordinates (2S)-2-hydroxy-3-oxobutyl phosphate.

It belongs to the DMRL synthase family.

It catalyses the reaction (2S)-2-hydroxy-3-oxobutyl phosphate + 5-amino-6-(D-ribitylamino)uracil = 6,7-dimethyl-8-(1-D-ribityl)lumazine + phosphate + 2 H2O + H(+). The protein operates within cofactor biosynthesis; riboflavin biosynthesis; riboflavin from 2-hydroxy-3-oxobutyl phosphate and 5-amino-6-(D-ribitylamino)uracil: step 1/2. In terms of biological role, catalyzes the formation of 6,7-dimethyl-8-ribityllumazine by condensation of 5-amino-6-(D-ribitylamino)uracil with 3,4-dihydroxy-2-butanone 4-phosphate. This is the penultimate step in the biosynthesis of riboflavin. The polypeptide is 6,7-dimethyl-8-ribityllumazine synthase (Gloeobacter violaceus (strain ATCC 29082 / PCC 7421)).